A 178-amino-acid polypeptide reads, in one-letter code: Ribosomal RNA small subunit methyltransferase G (178 aa).

S-adenosyl-L-methionine-binding positions include Gly54, Leu59, Leu105–Glu106, and Arg120.

Belongs to the methyltransferase superfamily. RNA methyltransferase RsmG family.

Its subcellular location is the cytoplasm. It catalyses the reaction guanosine(527) in 16S rRNA + S-adenosyl-L-methionine = N(7)-methylguanosine(527) in 16S rRNA + S-adenosyl-L-homocysteine. Specifically methylates the N7 position of guanine in position 527 of 16S rRNA. This is Ribosomal RNA small subunit methyltransferase G from Helicobacter acinonychis (strain Sheeba).